The sequence spans 307 residues: Protein pxr1 (307 aa).

Over residues 1–11 (MGLAAPRKKTK) the composition is skewed to basic residues. 2 disordered regions span residues 1-25 (MGLAAPRKKTKISHDPNNTSWSRST) and 144-234 (NATA…SDCD). Residues 15–25 (DPNNTSWSRST) show a composition bias toward polar residues. Residues 25–79 (TDGFGHRILKAQGWTPGGFLGARNATHSDLFTTASASHIRVVLKDDTLGLGARPK) enclose the G-patch domain. Composition is skewed to basic and acidic residues over residues 154–168 (LRVDFPRETSSHESE) and 206–221 (GKELDMSSRKSREKKQ).

It belongs to the PINX1 family.

It is found in the nucleus. Its subcellular location is the nucleolus. Involved in rRNA-processing at A0, A1 and A2 sites and negatively regulates telomerase. This Neosartorya fischeri (strain ATCC 1020 / DSM 3700 / CBS 544.65 / FGSC A1164 / JCM 1740 / NRRL 181 / WB 181) (Aspergillus fischerianus) protein is Protein pxr1 (pxr1).